We begin with the raw amino-acid sequence, 341 residues long: UDP-glucose 4-epimerase (341 aa).

Belongs to the polysaccharide synthase family.

It carries out the reaction UDP-alpha-D-glucose = UDP-alpha-D-galactose. Functionally, epimerizes UDP-galactose to UDP-glucose. The chain is UDP-glucose 4-epimerase (capD) from Rickettsia canadensis (strain McKiel).